The following is a 105-amino-acid chain: Large ribosomal subunit protein uL24 (105 aa).

It belongs to the universal ribosomal protein uL24 family. As to quaternary structure, part of the 50S ribosomal subunit.

Its function is as follows. One of two assembly initiator proteins, it binds directly to the 5'-end of the 23S rRNA, where it nucleates assembly of the 50S subunit. One of the proteins that surrounds the polypeptide exit tunnel on the outside of the subunit. The polypeptide is Large ribosomal subunit protein uL24 (Nitrosospira multiformis (strain ATCC 25196 / NCIMB 11849 / C 71)).